We begin with the raw amino-acid sequence, 134 residues long: UPF0216 protein AF_0460 (134 aa).

This sequence belongs to the UPF0216 family.

The chain is UPF0216 protein AF_0460 from Archaeoglobus fulgidus (strain ATCC 49558 / DSM 4304 / JCM 9628 / NBRC 100126 / VC-16).